The chain runs to 292 residues: 4-hydroxy-tetrahydrodipicolinate synthase (292 aa).

Residue Thr45 coordinates pyruvate. The active-site Proton donor/acceptor is Tyr133. Lys161 serves as the catalytic Schiff-base intermediate with substrate. A pyruvate-binding site is contributed by Ile203.

It belongs to the DapA family. In terms of assembly, homotetramer; dimer of dimers.

Its subcellular location is the cytoplasm. The catalysed reaction is L-aspartate 4-semialdehyde + pyruvate = (2S,4S)-4-hydroxy-2,3,4,5-tetrahydrodipicolinate + H2O + H(+). Its pathway is amino-acid biosynthesis; L-lysine biosynthesis via DAP pathway; (S)-tetrahydrodipicolinate from L-aspartate: step 3/4. Catalyzes the condensation of (S)-aspartate-beta-semialdehyde [(S)-ASA] and pyruvate to 4-hydroxy-tetrahydrodipicolinate (HTPA). This chain is 4-hydroxy-tetrahydrodipicolinate synthase, found in Sodalis glossinidius (strain morsitans).